The chain runs to 1068 residues: Ubiquitin-protein ligase E3B (1068 aa).

Position 1 is an N-acetylmethionine (M1). The IQ domain occupies 29–58; it reads RERAAVVIQAHVRSFLCRSRLQRDIRREID. Residue S419 is modified to Phosphoserine. An HECT domain is found at 702-1068; sequence SQHAMKGVIR…ISMNTGFELS (367 aa). C1036 (glycyl thioester intermediate) is an active-site residue.

Widely expressed.

The protein localises to the postsynaptic density. It catalyses the reaction S-ubiquitinyl-[E2 ubiquitin-conjugating enzyme]-L-cysteine + [acceptor protein]-L-lysine = [E2 ubiquitin-conjugating enzyme]-L-cysteine + N(6)-ubiquitinyl-[acceptor protein]-L-lysine.. Its pathway is protein modification; protein ubiquitination. E3 ubiquitin-protein ligase which accepts ubiquitin from an E2 ubiquitin-conjugating enzyme in the form of a thioester and then directly transfers the ubiquitin to targeted substrates. Ubiquitinates BCKDK and targets it for degradation, thereby regulating various metabolic processes. Involved in the positive regulation of neurite branching in hippocampal neurons and the control of neuronal spine number and morphology, through the ubiquitination of PPP3CC. The sequence is that of Ubiquitin-protein ligase E3B (UBE3B) from Homo sapiens (Human).